The primary structure comprises 303 residues: Zinc transporter ZIP9-B (303 aa).

The chain crosses the membrane as a helical span at residues 7-27 (ISLLSLAMLVGCYVSGIIPLA). Residue Asn-29 is glycosylated (N-linked (GlcNAc...) asparagine). 5 helical membrane passes run 35-55 (LKLV…AVIV), 102-122 (AYIG…DQIG), 142-162 (ITTT…LGAA), 172-192 (LIVF…LVSF), and 206-226 (HLLV…LGLS). N-linked (GlcNAc...) asparagine glycosylation occurs at Asn-237. Helical transmembrane passes span 240–260 (GVAM…HVLP) and 282–302 (LEVC…IGHQ).

This sequence belongs to the ZIP transporter (TC 2.A.5) family.

It is found in the golgi apparatus. It localises to the trans-Golgi network membrane. The protein resides in the cell membrane. The protein localises to the cytoplasm. Its subcellular location is the perinuclear region. It is found in the mitochondrion. It localises to the nucleus. The catalysed reaction is Zn(2+)(in) = Zn(2+)(out). Transports zinc ions across cell and organelle membranes into the cytoplasm and regulates intracellular zinc homeostasis. Participates in the zinc ions efflux out of the secretory compartments. Regulates intracellular zinc level, resulting in the enhancement of AKT1 and MAPK3/MAPK1 (Erk1/2) phosphorylation in response to the BCR activation. Also functions as a membrane androgen receptor that mediates, through a G protein, the non-classical androgen signaling pathway, characterized by the activation of MAPK3/MAPK1 (Erk1/2) and transcription factors CREB1 or ATF1. Moreover, has dual functions as a membrane-bound androgen receptor and as an androgen-dependent zinc transporter both of which are mediated through an inhibitory G protein (Gi) that mediates both MAP kinase and zinc signaling leading to the androgen-dependent apoptotic process. This Xenopus laevis (African clawed frog) protein is Zinc transporter ZIP9-B (slc39a9-b).